Reading from the N-terminus, the 341-residue chain is L-threonine 3-dehydrogenase (341 aa).

Cysteine 38 serves as a coordination point for Zn(2+). Catalysis depends on charge relay system residues threonine 40 and histidine 43. Residues histidine 63, glutamate 64, cysteine 93, cysteine 96, cysteine 99, and cysteine 107 each contribute to the Zn(2+) site. Residues isoleucine 175, aspartate 195, arginine 200, 262–264 (LGI), and 286–287 (IY) each bind NAD(+).

Belongs to the zinc-containing alcohol dehydrogenase family. Homotetramer. Zn(2+) is required as a cofactor.

It localises to the cytoplasm. The enzyme catalyses L-threonine + NAD(+) = (2S)-2-amino-3-oxobutanoate + NADH + H(+). It functions in the pathway amino-acid degradation; L-threonine degradation via oxydo-reductase pathway; glycine from L-threonine: step 1/2. Functionally, catalyzes the NAD(+)-dependent oxidation of L-threonine to 2-amino-3-ketobutyrate. The sequence is that of L-threonine 3-dehydrogenase from Salmonella gallinarum (strain 287/91 / NCTC 13346).